A 400-amino-acid polypeptide reads, in one-letter code: Imidazolonepropionase (400 aa).

Positions 70 and 72 each coordinate Fe(3+). Residues His-70 and His-72 each coordinate Zn(2+). The 4-imidazolone-5-propanoate site is built by Arg-79, Tyr-142, and His-175. An N-formimidoyl-L-glutamate-binding site is contributed by Tyr-142. His-239 is a Fe(3+) binding site. His-239 provides a ligand contact to Zn(2+). Residue Gln-242 participates in 4-imidazolone-5-propanoate binding. Asp-314 serves as a coordination point for Fe(3+). Asp-314 contacts Zn(2+). N-formimidoyl-L-glutamate is bound by residues Asn-316 and Gly-318. Thr-319 contributes to the 4-imidazolone-5-propanoate binding site.

Belongs to the metallo-dependent hydrolases superfamily. HutI family. The cofactor is Zn(2+). Fe(3+) is required as a cofactor.

Its subcellular location is the cytoplasm. It catalyses the reaction 4-imidazolone-5-propanoate + H2O = N-formimidoyl-L-glutamate. It functions in the pathway amino-acid degradation; L-histidine degradation into L-glutamate; N-formimidoyl-L-glutamate from L-histidine: step 3/3. Functionally, catalyzes the hydrolytic cleavage of the carbon-nitrogen bond in imidazolone-5-propanoate to yield N-formimidoyl-L-glutamate. It is the third step in the universal histidine degradation pathway. This chain is Imidazolonepropionase, found in Methylobacterium sp. (strain 4-46).